We begin with the raw amino-acid sequence, 354 residues long: Dihydroorotate dehydrogenase (quinone) (354 aa).

Residues 70 to 74 and threonine 94 contribute to the FMN site; that span reads AGFDK. Substrate is bound at residue lysine 74. 119–123 is a binding site for substrate; that stretch reads NAMGF. Residues asparagine 148 and asparagine 181 each contribute to the FMN site. Residue asparagine 181 participates in substrate binding. The active-site Nucleophile is serine 184. Asparagine 186 lines the substrate pocket. 2 residues coordinate FMN: lysine 217 and threonine 245. Position 246 to 247 (246 to 247) interacts with substrate; it reads NT. Residues glycine 265, glycine 294, and 315–316 each bind FMN; that span reads YS.

It belongs to the dihydroorotate dehydrogenase family. Type 2 subfamily. As to quaternary structure, monomer. The cofactor is FMN.

It localises to the cell membrane. The catalysed reaction is (S)-dihydroorotate + a quinone = orotate + a quinol. Its pathway is pyrimidine metabolism; UMP biosynthesis via de novo pathway; orotate from (S)-dihydroorotate (quinone route): step 1/1. Catalyzes the conversion of dihydroorotate to orotate with quinone as electron acceptor. This chain is Dihydroorotate dehydrogenase (quinone), found in Sulfurovum sp. (strain NBC37-1).